The chain runs to 102 residues: Large ribosomal subunit protein bL21 (102 aa).

The protein belongs to the bacterial ribosomal protein bL21 family. In terms of assembly, part of the 50S ribosomal subunit. Contacts protein L20.

In terms of biological role, this protein binds to 23S rRNA in the presence of protein L20. This chain is Large ribosomal subunit protein bL21, found in Macrococcus caseolyticus (strain JCSC5402) (Macrococcoides caseolyticum).